Reading from the N-terminus, the 361-residue chain is tRNA-specific 2-thiouridylase MnmA (361 aa).

Residues 11-18 and Met-37 each bind ATP; that span reads GMSGGVDS. The active-site Nucleophile is the Cys-106. Cys-106 and Cys-202 are oxidised to a cystine. Gly-130 is an ATP binding site. Residues 152–154 are interaction with tRNA; that stretch reads KDQ. The Cysteine persulfide intermediate role is filled by Cys-202. Positions 308–309 are interaction with tRNA; that stretch reads RY.

The protein belongs to the MnmA/TRMU family.

The protein resides in the cytoplasm. It carries out the reaction S-sulfanyl-L-cysteinyl-[protein] + uridine(34) in tRNA + AH2 + ATP = 2-thiouridine(34) in tRNA + L-cysteinyl-[protein] + A + AMP + diphosphate + H(+). In terms of biological role, catalyzes the 2-thiolation of uridine at the wobble position (U34) of tRNA, leading to the formation of s(2)U34. The protein is tRNA-specific 2-thiouridylase MnmA of Clostridium botulinum (strain Alaska E43 / Type E3).